The following is a 78-amino-acid chain: Large ribosomal subunit protein bL28 (78 aa).

The disordered stretch occupies residues 1 to 24 (MSQVCQVTGKRPVTGNNVSHSQRK).

The protein belongs to the bacterial ribosomal protein bL28 family.

The sequence is that of Large ribosomal subunit protein bL28 from Chromohalobacter salexigens (strain ATCC BAA-138 / DSM 3043 / CIP 106854 / NCIMB 13768 / 1H11).